Here is a 131-residue protein sequence, read N- to C-terminus: Large-conductance mechanosensitive channel (131 aa).

Helical transmembrane passes span 8 to 28 (FAVR…GAFG), 30 to 50 (IVSS…LGGI), and 67 to 87 (GAFL…FLFV).

This sequence belongs to the MscL family. Homopentamer.

The protein localises to the cell membrane. Channel that opens in response to stretch forces in the membrane lipid bilayer. May participate in the regulation of osmotic pressure changes within the cell. This Anoxybacillus flavithermus (strain DSM 21510 / WK1) protein is Large-conductance mechanosensitive channel.